Reading from the N-terminus, the 292-residue chain is Arabinose operon regulatory protein (292 aa).

Alpha-L-arabinopyanose contacts are provided by Pro-8, Thr-24, Arg-38, Tyr-82, and His-93. In terms of domain architecture, HTH araC/xylS-type spans 180 to 279 (REACQYISDH…GASPSEFRAG (100 aa)). 2 DNA-binding regions (H-T-H motif) span residues 198-219 (ASVAQHVCLSPSRLSHLFRQQL) and 246-269 (IATVGRNVGFDDQLYFSRVFKKCT).

As to quaternary structure, homodimer.

Its subcellular location is the cytoplasm. With respect to regulation, arabinose converts the repressor form of AraC to the activator form to regulate the araBAD promoter. In the absence of arabinose, AraC binds to the araO2 and araI1 half-sites in the promoter region of the araBAD operon, leading to the formation of a DNA loop that blocks access of RNA polymerase to the promoter. In the presence of arabinose and the cyclic AMP receptor protein (CRP), it binds to the adjacent half-sites araI1 and araI2, leading to the binding of RNA polymerase to the promoter region and transcription of the araBAD operon. AraI1 acts as a switch mechanism allowing both the repressor and the activator forms of AraC protein to regulate the araBAD promoter. Inhibited by D-fucose, which binds competitively to the same site on the protein. Functionally, transcription factor that regulates the expression of several genes involved in the transport and metabolism of L-arabinose. Functions both as a positive and a negative regulator. In the presence of arabinose, activates the expression of the araBAD, araE, araFGH and araJ promoters. In the absence of arabinose, negatively regulates the araBAD operon. Represses its own transcription. Acts by binding directly to DNA. This chain is Arabinose operon regulatory protein, found in Escherichia coli (strain K12).